The primary structure comprises 360 residues: DNA replication and repair protein RecF (360 aa).

33-40 (GENGSGKT) is a binding site for ATP.

This sequence belongs to the RecF family.

It localises to the cytoplasm. The RecF protein is involved in DNA metabolism; it is required for DNA replication and normal SOS inducibility. RecF binds preferentially to single-stranded, linear DNA. It also seems to bind ATP. In Rickettsia africae (strain ESF-5), this protein is DNA replication and repair protein RecF.